Consider the following 313-residue polypeptide: Porphobilinogen deaminase (313 aa).

S-(dipyrrolylmethanemethyl)cysteine is present on Cys-241.

Belongs to the HMBS family. As to quaternary structure, monomer. Dipyrromethane is required as a cofactor.

The catalysed reaction is 4 porphobilinogen + H2O = hydroxymethylbilane + 4 NH4(+). The protein operates within porphyrin-containing compound metabolism; protoporphyrin-IX biosynthesis; coproporphyrinogen-III from 5-aminolevulinate: step 2/4. It participates in porphyrin-containing compound metabolism; chlorophyll biosynthesis. Its function is as follows. Tetrapolymerization of the monopyrrole PBG into the hydroxymethylbilane pre-uroporphyrinogen in several discrete steps. The sequence is that of Porphobilinogen deaminase from Chlorobium phaeovibrioides (strain DSM 265 / 1930) (Prosthecochloris vibrioformis (strain DSM 265)).